Reading from the N-terminus, the 128-residue chain is Glycine cleavage system H protein (128 aa).

Residues 24–106 (VYTVGITEHA…YAEGFLFQIK (83 aa)) form the Lipoyl-binding domain. Lysine 65 is subject to N6-lipoyllysine.

It belongs to the GcvH family. The glycine cleavage system is composed of four proteins: P, T, L and H. (R)-lipoate serves as cofactor.

Its function is as follows. The glycine cleavage system catalyzes the degradation of glycine. The H protein shuttles the methylamine group of glycine from the P protein to the T protein. This Serratia proteamaculans (strain 568) protein is Glycine cleavage system H protein.